A 281-amino-acid polypeptide reads, in one-letter code: 3-hydroxyanthranilate 3,4-dioxygenase (281 aa).

Positions 1–162 (MAGVTAIEIP…SNEFKTGKPG (162 aa)) are domain A (catalytic). Arginine 45 is an O2 binding site. Positions 49, 55, and 93 each coordinate Fe cation. Glutamate 55 lines the substrate pocket. Positions 97 and 107 each coordinate substrate. The linker stretch occupies residues 163–179 (KGTFACNAPYEARWTDL). The tract at residues 180–281 (PVPINRKEFI…GFAITIRMPG (102 aa)) is domain B.

It belongs to the 3-HAO family. Fe(2+) is required as a cofactor.

It is found in the cytoplasm. It catalyses the reaction 3-hydroxyanthranilate + O2 = (2Z,4Z)-2-amino-3-carboxymuconate 6-semialdehyde. Its pathway is cofactor biosynthesis; NAD(+) biosynthesis; quinolinate from L-kynurenine: step 3/3. In terms of biological role, catalyzes the oxidative ring opening of 3-hydroxyanthranilate to 2-amino-3-carboxymuconate semialdehyde, which spontaneously cyclizes to quinolinate. This Caenorhabditis briggsae protein is 3-hydroxyanthranilate 3,4-dioxygenase (haao-1).